A 326-amino-acid chain; its full sequence is Phosphotriesterase homology protein (326 aa).

Zn(2+)-binding residues include H22, H24, K145, H178, H207, and D264. K145 is modified (N6-carboxylysine).

The protein belongs to the metallo-dependent hydrolases superfamily. Phosphotriesterase family. The cofactor is Zn(2+).

The sequence is that of Phosphotriesterase homology protein (php) from Mycobacterium tuberculosis (strain CDC 1551 / Oshkosh).